The primary structure comprises 252 residues: MATSKVLLSNVLFVFVCFGICSAARTLLTLEDRVNLHVGTVVGGYGGGGGSGGGGGGAAVELGGGGYGEGAGGGEGAGAGYGAAGGGHGGGGGNGGGGGGGADGGGYGGGAGKGGGEGYGGGGANGGGYGGGGGSGGGGGGGAGGAGSGYGGGEGSGAGGGYGGANGGGGGGNGGGGGGGSGGAHGGGAAGGGEGAGQGAGGGYGGGAAGGGGRGSGGGGGGGYGGGGARGSGYGGGGGSGEGGGHGGGYYP.

The N-terminal stretch at 1-30 (MATSKVLLSNVLFVFVCFGICSAARTLLTL) is a signal peptide. Residues 231 to 252 (GSGYGGGGGSGEGGGHGGGYYP) are disordered.

Expressed in young hypocotyls.

The protein resides in the secreted. Its subcellular location is the cell wall. Responsible for plasticity of the cell wall. In Phaseolus vulgaris (Kidney bean), this protein is Glycine-rich cell wall structural protein 1.0.